Consider the following 1348-residue polypeptide: ABC multidrug transporter atrD (1348 aa).

The segment covering 1–10 has biased composition (polar residues); that stretch reads MSPLETNPLS. Residues 1–67 form a disordered region; the sequence is MSPLETNPLS…HRPKSSSSNN (67 aa). Positions 20–31 are enriched in low complexity; that stretch reads ETSTTEEQASTP. Asn99 carries N-linked (GlcNAc...) asparagine glycosylation. 4 consecutive transmembrane segments (helical) span residues 114–134, 168–188, 240–260, and 268–288; these read ILIMVISTICAIAAGAALPLF, YFVYLGIGEFVTVYVSTVGFI, KVGLTLTALATFVTAFIIAYV, and ICSSTIVALVLTMGGGSQFII. One can recognise an ABC transmembrane type-1 1 domain in the interval 118–408; it reads VISTICAIAA…VSPNAQAFTN (291 aa). N-linked (GlcNAc...) asparagine glycosylation occurs at Asn314. The next 2 helical transmembrane spans lie at 344-364 and 371-391; these read IVMGFMIGAMFGLMYSNYGLG and FLVDGAVDVGDILTVLMAILI. One can recognise an ABC transporter 1 domain in the interval 443 to 688; that stretch reads IELRNVKHIY…GGAYRKLVEA (246 aa). 478–485 is an ATP binding site; that stretch reads GPSGSGKS. Residue Asn550 is glycosylated (N-linked (GlcNAc...) asparagine). The next 2 helical transmembrane spans lie at 778-798 and 825-845; these read MLIGLVFSVLAGGGQPTQAVL and LMFFVVGIIQFITQSTNGAAF. An ABC transmembrane type-1 2 domain is found at 779–1068; sequence LIGLVFSVLA…VFSFAPDMGK (290 aa). N-linked (GlcNAc...) asparagine glycosylation occurs at Asn877. The next 4 membrane-spanning stretches (helical) occupy residues 892 to 912, 925 to 947, 1015 to 1035, and 1042 to 1062; these read HLSGVSGVTLGTILMTSTTLG, LALVCISVVPVLLACGFYRFYML, ALVFFCVALGFWYGGTLLGHH, and FFVCFSEILFGAQSAGTVFSF. The N-linked (GlcNAc...) asparagine glycan is linked to Asn1088. In terms of domain architecture, ABC transporter 2 spans 1103–1341; that stretch reads IEFRNVHFRY…KGRYYELVNL (239 aa). 1138–1145 is a binding site for ATP; sequence GPSGCGKS.

It belongs to the ABC transporter superfamily. ABCB family. Multidrug resistance exporter (TC 3.A.1.201) subfamily.

The protein resides in the cell membrane. With respect to regulation, fenamirol efflux transporter activity is inhibited by the cyclosporin derivative PSC 833, nigericin, reserpine and valinomycin. The effect of reserpine is transiant, while that of the cyclosporin derivative PSC 833, nigericin and valinomycin is proportional to the time of exposure. Cyclohexinmide has inhibitory effect only when applied prior to addition of the fungicide. Its function is as follows. Pleiotropic ABC efflux transporter involved in the protection of the cells against a wide range of toxic compounds. Confers resistance to the azole fenarimol via efflux transport. May also be involved in the secretion of penicillin. This Emericella nidulans (Aspergillus nidulans) protein is ABC multidrug transporter atrD.